The following is a 36-amino-acid chain: Photosystem I reaction center subunit VIII (36 aa).

Residues 8-28 (SLFVPLVGLVFPAIAMASLFL) form a helical membrane-spanning segment.

It belongs to the PsaI family.

The protein localises to the plastid. Its subcellular location is the chloroplast thylakoid membrane. In terms of biological role, may help in the organization of the PsaL subunit. The sequence is that of Photosystem I reaction center subunit VIII from Brassica oleracea (Wild cabbage).